We begin with the raw amino-acid sequence, 293 residues long: 4-hydroxy-tetrahydrodipicolinate synthase (293 aa).

Thr-44 is a binding site for pyruvate. The Proton donor/acceptor role is filled by Tyr-132. Lys-162 functions as the Schiff-base intermediate with substrate in the catalytic mechanism. Residue Ile-204 coordinates pyruvate.

Belongs to the DapA family. As to quaternary structure, homotetramer; dimer of dimers.

The protein localises to the cytoplasm. The catalysed reaction is L-aspartate 4-semialdehyde + pyruvate = (2S,4S)-4-hydroxy-2,3,4,5-tetrahydrodipicolinate + H2O + H(+). Its pathway is amino-acid biosynthesis; L-lysine biosynthesis via DAP pathway; (S)-tetrahydrodipicolinate from L-aspartate: step 3/4. Catalyzes the condensation of (S)-aspartate-beta-semialdehyde [(S)-ASA] and pyruvate to 4-hydroxy-tetrahydrodipicolinate (HTPA). The polypeptide is 4-hydroxy-tetrahydrodipicolinate synthase (Erythrobacter litoralis (strain HTCC2594)).